Consider the following 75-residue polypeptide: MRLIVVSIMVTLLSGCGSIISRTIPGQGHGNQYYPGVQWDVRDSAWRYVTILDLPFSLVFDTLLLPIDIHHGPYE.

The N-terminal stretch at M1 to S21 is a signal peptide.

It to E.coli YidQ.

This is an uncharacterized protein from Escherichia coli O157:H7.